Consider the following 917-residue polypeptide: Chitin synthase 1 (917 aa).

A compositionally biased stretch (basic and acidic residues) spans 1–11 (MAYHGRGDGYD). A disordered region spans residues 1–56 (MAYHGRGDGYDGHQLQDLPGGHNQGDQHDDAQAPFLSENPMPYDNDRLGTDTPPVR). The Extracellular portion of the chain corresponds to 1-570 (MAYHGRGDGY…YKSGHNIVRM (570 aa)). Asn-544 carries N-linked (GlcNAc...) asparagine glycosylation. Residues 571-591 (FFFHVQLIYNIANVIFTWFSL) traverse the membrane as a helical segment. The Cytoplasmic portion of the chain corresponds to 592–629 (ASYWLTTTVIMDLVGTPVTASSSSAEHHGWPFGDTVTP). The chain crosses the membrane as a helical span at residues 630–650 (FFNAVLKYIYLAFVILQFILA). Topologically, residues 651–664 (LGNRPKGSKWTYIT) are extracellular. A helical membrane pass occupies residues 665-685 (SFFVFSLIQSYILVLSGYLVA). Topologically, residues 686–716 (RAFSVPLDQQLQLDNAKDAMASLFGGSGSAG) are cytoplasmic. Residues 717-737 (VILVALVTIYGLYFLASFMYL) form a helical membrane-spanning segment. Topologically, residues 738–744 (DPWHMFH) are extracellular. The chain crosses the membrane as a helical span at residues 745–765 (SFPYYMLLMSTYINILMIYAF). Residues 766–843 (NNWHDVSWGT…DLEDSYKSFR (78 aa)) lie on the Cytoplasmic side of the membrane. Residues 844–864 (TMLVVSWLFSNCLLAVVITSD) form a helical membrane-spanning segment. The Extracellular segment spans residues 865–884 (NFNTFGIGQTASARTAWFFK). A helical transmembrane segment spans residues 885–905 (FLLFATGALSVIRFIGFCWFL). Topologically, residues 906–917 (GRTGIMCCFARR) are cytoplasmic.

Belongs to the chitin synthase family. Class III subfamily.

The protein resides in the cell membrane. It catalyses the reaction [(1-&gt;4)-N-acetyl-beta-D-glucosaminyl](n) + UDP-N-acetyl-alpha-D-glucosamine = [(1-&gt;4)-N-acetyl-beta-D-glucosaminyl](n+1) + UDP + H(+). In terms of biological role, polymerizes chitin, a structural polymer of the cell wall and septum, by transferring the sugar moiety of UDP-GlcNAc to the non-reducing end of the growing chitin polymer. This Neurospora crassa (strain ATCC 24698 / 74-OR23-1A / CBS 708.71 / DSM 1257 / FGSC 987) protein is Chitin synthase 1 (chs-1).